The chain runs to 600 residues: Keratin, type II cuticular Hb4 (600 aa).

The segment at 1–165 is head; it reads MSCRSYRVSS…PNAQRVKKDE (165 aa). The IF rod domain maps to 165-476; that stretch reads EKEQIKTLNN…RLLEGEESRL (312 aa). The tract at residues 166-200 is coil 1A; sequence KEQIKTLNNKFASFIDKVRFLEQQNKLLETKWSFL. Residues 201–210 form a linker 1 region; that stretch reads QEQKCIRSNL. The interval 211-311 is coil 1B; sequence EPLFESYITN…YMEEIQLLQS (101 aa). The tract at residues 312–328 is linker 12; it reads HISETSVIVKMDNSRDL. Residues 329–472 are coil 2; sequence NLDGIIAEVK…ATYRRLLEGE (144 aa). Residues 473–600 are tail; sequence ESRLCEGVGP…STTTSCRTKY (128 aa).

Belongs to the intermediate filament family. Heterotetramer of two type I and two type II keratins. As to expression, expressed in the hair follicles.

In Homo sapiens (Human), this protein is Keratin, type II cuticular Hb4 (KRT84).